The chain runs to 1042 residues: Atrial natriuretic peptide-converting enzyme (1042 aa).

A disordered region spans residues 1-25 (MKQSPALAPEERCRRAGSPKPVLRA). The Cytoplasmic segment spans residues 1–45 (MKQSPALAPEERCRRAGSPKPVLRADDNNMGNGCSQKLATANLLR). The short motif at 26-29 (DDNN) is the DDNN motif element. A helical; Signal-anchor for type II membrane protein transmembrane segment spans residues 46-66 (FLLLVLIPCICALVLLLVILL). The Extracellular portion of the chain corresponds to 67 to 1042 (SYVGTLQKVY…QIYIQTFLLN (976 aa)). Residues N80, N104, N135, and N141 are each glycosylated (N-linked (GlcNAc...) asparagine). The 126-residue stretch at 134–259 (RNTSACMNIT…SNVSRICFSP (126 aa)) folds into the FZ 1 domain. 8 cysteine pairs are disulfide-bonded: C139–C199, C147–C192, C183–C223, C212–C256, C216–C240, C269–C282, C277–C295, and C289–C304. N231, N245, and N251 each carry an N-linked (GlcNAc...) asparagine glycan. LDL-receptor class A domains lie at 268–304 (LCGR…EAHC), 305–340 (NCSE…EQNC), 341–377 (DCNP…EVNC), and 378–415 (SCHS…ENCS). Residue N305 is glycosylated (N-linked (GlcNAc...) asparagine). Disulfide bonds link C306–C318, C313–C331, C325–C340, C342–C355, C350–C368, C362–C377, C379–C392, C387–C405, and C399–C414. N320 is a glycosylation site (N-linked (GlcNAc...) asparagine). N376 carries an N-linked (GlcNAc...) asparagine glycan. Residues N413, N446, N451, and N469 are each glycosylated (N-linked (GlcNAc...) asparagine). Positions 450-573 (NNCSQCEPIT…NSDNQTCLMP (124 aa)) constitute an FZ 2 domain. 14 disulfides stabilise this stretch: C455/C518, C463/C511, C502/C540, C529/C570, C533/C557, C580/C592, C587/C605, C599/C614, C616/C630, C624/C643, C637/C652, C655/C667, C662/C680, and C674/C689. N-linked (GlcNAc...) asparagine glycosylation is present at N567. LDL-receptor class A domains are found at residues 579–614 (ECSP…EENC), 615–653 (GCKE…KNCS), and 654–689 (FCQD…EWDC). N651 carries an N-linked (GlcNAc...) asparagine glycan. The SRCR domain maps to 690 to 801 (VTLSINVNSS…RRPAARMNKR (112 aa)). N-linked (GlcNAc...) asparagine glycosylation is found at N697 and N761. 5 disulfides stabilise this stretch: C790–C912, C828–C844, C926–C991, C955–C970, and C981–C1010. In terms of domain architecture, Peptidase S1 spans 802 to 1035 (ILGGRTSRPG…FVEWIKRQIY (234 aa)). Active-site charge relay system residues include H843 and D892. Catalysis depends on S985, which acts as the Charge relay system. N1022 carries N-linked (GlcNAc...) asparagine glycosylation.

It belongs to the peptidase S1 family. In terms of processing, N-glycosylated; required for processing and activation. Post-translationally, activated through proteolytic processing by a trypsin-like protease; cleaved into a N-terminal propeptide and an activated corin protease fragment. Different soluble forms are produced by cleavage and autocatalytic cleavage: Atrial natriuretic peptide-converting enzyme, 180 kDa soluble fragment is produced by cleavage by ADAM10, while 160 kDa and 100 kDa soluble fragments are produced by autocatalytic cleavage. Cleavage by ADAM10 to produce soluble 180 kDa soluble fragment takes place after the transmembrane region and before FZ 1. A disulfide bond links the activated corin protease fragment and the N-terminal propeptide. The disulfide bond also links the activated corin protease fragment with soluble fragments (100 kDa, 160 kDa and 180 kDa fragments). As to expression, highly expressed in heart. Expressed in heart myocytes. Also expressed in pregnant uterus. Detected in blood, in plasma as well as in serum (at protein level).

The protein resides in the cell membrane. The protein localises to the secreted. With respect to regulation, inhibited in a dose-dependent manner by non-specific trypsin-like serine protease inhibitors including benzamidine. Serine-type endopeptidase involved in atrial natriuretic peptide (NPPA) and brain natriuretic peptide (NPPB) processing. Converts through proteolytic cleavage the non-functional propeptides NPPA and NPPB into their active hormones, ANP and BNP(1-32) respectively, thereby regulating blood pressure in the heart and promoting natriuresis, diuresis and vasodilation. Proteolytic cleavage of pro-NPPA also plays a role in female pregnancy by promoting trophoblast invasion and spiral artery remodeling in uterus. Also acts as a regulator of sodium reabsorption in kidney. Its function is as follows. Has weaker endopeptidase activity compared to isoform 1. This chain is Atrial natriuretic peptide-converting enzyme (CORIN), found in Homo sapiens (Human).